Here is a 238-residue protein sequence, read N- to C-terminus: MTTELHDDASGRLIVGLDVPTIAEAEKVVEELGNAVSFYKIGYQLVFAGGLDFAKSLVAARKKVFLDMKLLDIDNTIAKGVENVAKMGVSMLTLHAYPKAMRAAVEAARGSDLCLLGVTVLTSMDNADLREAGYSDNAETLVLKRARQAHEAGMGGIVASAVEAQAIRQAVGPDMAIVTPGIRPAGSEKGDQKRVMTPADALRAGASHLVVARPIVGAPDRKAAALAILKEMRSIGRS.

Substrate-binding positions include D18, K40, 67–76 (DMKLLDIDNT), T122, R183, Q192, and R213. K69 serves as the catalytic Proton donor.

Belongs to the OMP decarboxylase family. Type 1 subfamily. Homodimer.

The catalysed reaction is orotidine 5'-phosphate + H(+) = UMP + CO2. It participates in pyrimidine metabolism; UMP biosynthesis via de novo pathway; UMP from orotate: step 2/2. Its function is as follows. Catalyzes the decarboxylation of orotidine 5'-monophosphate (OMP) to uridine 5'-monophosphate (UMP). The protein is Orotidine 5'-phosphate decarboxylase of Brucella canis (strain ATCC 23365 / NCTC 10854 / RM-666).